The chain runs to 240 residues: UDP-2,3-diacylglucosamine hydrolase (240 aa).

Mn(2+) contacts are provided by aspartate 9, histidine 11, aspartate 43, asparagine 81, and histidine 116. Residue 81 to 82 coordinates substrate; it reads NR. Substrate-binding residues include aspartate 124, serine 162, lysine 166, lysine 169, and histidine 197. Mn(2+) is bound by residues histidine 197 and histidine 199.

Belongs to the LpxH family. Requires Mn(2+) as cofactor.

The protein localises to the cell inner membrane. The catalysed reaction is UDP-2-N,3-O-bis[(3R)-3-hydroxytetradecanoyl]-alpha-D-glucosamine + H2O = 2-N,3-O-bis[(3R)-3-hydroxytetradecanoyl]-alpha-D-glucosaminyl 1-phosphate + UMP + 2 H(+). Its pathway is glycolipid biosynthesis; lipid IV(A) biosynthesis; lipid IV(A) from (3R)-3-hydroxytetradecanoyl-[acyl-carrier-protein] and UDP-N-acetyl-alpha-D-glucosamine: step 4/6. Its function is as follows. Hydrolyzes the pyrophosphate bond of UDP-2,3-diacylglucosamine to yield 2,3-diacylglucosamine 1-phosphate (lipid X) and UMP by catalyzing the attack of water at the alpha-P atom. Involved in the biosynthesis of lipid A, a phosphorylated glycolipid that anchors the lipopolysaccharide to the outer membrane of the cell. This Neisseria gonorrhoeae (strain ATCC 700825 / FA 1090) protein is UDP-2,3-diacylglucosamine hydrolase.